Here is a 280-residue protein sequence, read N- to C-terminus: Pantothenate synthetase (280 aa).

Residue methionine 30–histidine 37 participates in ATP binding. Histidine 37 functions as the Proton donor in the catalytic mechanism. (R)-pantoate is bound at residue glutamine 61. Glutamine 61 is a beta-alanine binding site. Glycine 147–aspartate 150 lines the ATP pocket. Residue glutamine 153 participates in (R)-pantoate binding. ATP is bound by residues valine 176 and methionine 184–arginine 187.

It belongs to the pantothenate synthetase family. Homodimer.

Its subcellular location is the cytoplasm. It carries out the reaction (R)-pantoate + beta-alanine + ATP = (R)-pantothenate + AMP + diphosphate + H(+). The protein operates within cofactor biosynthesis; (R)-pantothenate biosynthesis; (R)-pantothenate from (R)-pantoate and beta-alanine: step 1/1. In terms of biological role, catalyzes the condensation of pantoate with beta-alanine in an ATP-dependent reaction via a pantoyl-adenylate intermediate. This chain is Pantothenate synthetase, found in Thermodesulfovibrio yellowstonii (strain ATCC 51303 / DSM 11347 / YP87).